A 345-amino-acid polypeptide reads, in one-letter code: Platelet-derived growth factor C (345 aa).

A signal peptide spans 1–22 (MLLLGLLLLTSALAGRRHGAAA). In terms of domain architecture, CUB spans 46 to 163 (HEKIITVTSN…PGFCIHYTLL (118 aa)). Residue N55 is glycosylated (N-linked (GlcNAc...) asparagine). 4 disulfides stabilise this stretch: C104–C124, C250–C294, C280–C335, and C287–C337.

This sequence belongs to the PDGF/VEGF growth factor family. In terms of assembly, homodimer; disulfide-linked. Interacts with PDGFRA homodimers, and with heterodimers formed by PDGFRA and PDGFRB. Proteolytic removal of the N-terminal CUB domain releasing the core domain is necessary for unmasking the receptor-binding epitopes of the core domain. Cleavage after basic residues in the hinge region (region connecting the CUB and growth factor domains) gives rise to the receptor-binding form.

The protein localises to the secreted. Its function is as follows. Growth factor that plays an essential role in the regulation of embryonic development, cell proliferation, cell migration, survival and chemotaxis. Potent mitogen and chemoattractant for cells of mesenchymal origin. Required for normal skeleton formation during embryonic development. Required for normal skin morphogenesis during embryonic development. Plays an important role in wound healing, in angiogenesis and blood vessel development. In Gallus gallus (Chicken), this protein is Platelet-derived growth factor C (PDGFC).